Reading from the N-terminus, the 136-residue chain is Membrane-bound negative regulator YvrL (136 aa).

Transmembrane regions (helical) follow at residues 18–38, 46–66, 83–103, and 106–126; these read LLAA…LFSL, AAHV…FEPF, LFIL…AHTT, and LISD…VFLI.

It is found in the cell membrane. In terms of biological role, negatively regulates RNA polymerase sigma factor SigO-dependent transcription. Prevents the expression or secretion of OxdC under nonstress conditions. May act as an anti-sigma factor. This Bacillus subtilis (strain 168) protein is Membrane-bound negative regulator YvrL (yvrL).